The chain runs to 599 residues: Sulfite reductase [NADPH] flavoprotein alpha-component (599 aa).

In terms of domain architecture, Flavodoxin-like spans 64–202; that stretch reads VTLISASQTG…AASEWRACVV (139 aa). Residues 70–75, 117–120, and 153–162 each bind FMN; these read SQTGNA, STQG, and LGDTSYEFFC. In terms of domain architecture, FAD-binding FR-type spans 234 to 448; sequence DAPLTATLSV…IEHNDNFRLP (215 aa). Residues Thr-322, Ala-356, 386–389, 404–406, Tyr-410, and 419–422 contribute to the FAD site; these read RLYS, TVG, and GGAS. Residues 519–520, 525–529, and Asp-561 contribute to the NADP(+) site; these read SR and KIYVQ. Tyr-599 provides a ligand contact to FAD.

This sequence belongs to the NADPH-dependent sulphite reductase flavoprotein subunit CysJ family. The protein in the N-terminal section; belongs to the flavodoxin family. It in the C-terminal section; belongs to the flavoprotein pyridine nucleotide cytochrome reductase family. As to quaternary structure, alpha(8)-beta(8). The alpha component is a flavoprotein, the beta component is a hemoprotein. It depends on FAD as a cofactor. FMN is required as a cofactor.

The enzyme catalyses hydrogen sulfide + 3 NADP(+) + 3 H2O = sulfite + 3 NADPH + 4 H(+). It functions in the pathway sulfur metabolism; hydrogen sulfide biosynthesis; hydrogen sulfide from sulfite (NADPH route): step 1/1. Its function is as follows. Component of the sulfite reductase complex that catalyzes the 6-electron reduction of sulfite to sulfide. This is one of several activities required for the biosynthesis of L-cysteine from sulfate. The flavoprotein component catalyzes the electron flow from NADPH -&gt; FAD -&gt; FMN to the hemoprotein component. The protein is Sulfite reductase [NADPH] flavoprotein alpha-component of Salmonella typhi.